The following is a 230-amino-acid chain: Ribose-5-phosphate isomerase A (230 aa).

Residues Thr-29–Thr-32, Asp-85–Asp-88, and Lys-98–Gly-101 contribute to the substrate site. Catalysis depends on Glu-107, which acts as the Proton acceptor. Substrate is bound at residue Lys-125.

The protein belongs to the ribose 5-phosphate isomerase family. Homodimer.

It carries out the reaction aldehydo-D-ribose 5-phosphate = D-ribulose 5-phosphate. Its pathway is carbohydrate degradation; pentose phosphate pathway; D-ribose 5-phosphate from D-ribulose 5-phosphate (non-oxidative stage): step 1/1. Functionally, catalyzes the reversible conversion of ribose-5-phosphate to ribulose 5-phosphate. The protein is Ribose-5-phosphate isomerase A of Staphylococcus haemolyticus (strain JCSC1435).